A 222-amino-acid chain; its full sequence is dTTP/UTP pyrophosphatase (222 aa).

The Proton acceptor role is filled by Asp-83.

Belongs to the Maf family. YhdE subfamily. It depends on a divalent metal cation as a cofactor.

The protein localises to the cytoplasm. The catalysed reaction is dTTP + H2O = dTMP + diphosphate + H(+). The enzyme catalyses UTP + H2O = UMP + diphosphate + H(+). Nucleoside triphosphate pyrophosphatase that hydrolyzes dTTP and UTP. May have a dual role in cell division arrest and in preventing the incorporation of modified nucleotides into cellular nucleic acids. The chain is dTTP/UTP pyrophosphatase from Desulfitobacterium hafniense (strain Y51).